Here is a 193-residue protein sequence, read N- to C-terminus: MIGRIAGILLEKNPPHLLVDCNGVGYEIDVPMSTFYNLPQTGERVVLLTQQIVREDAHLLYGFLTPQERTTFRELLKITGIGARMALAVLSGMSVQELAQAVTMQDAARLTRLPGIGKKTAERLLLELKGKLGADLGALAGAASQSDHATDILNALVALGYSEKEGLAAIKNVPAGTGVSEGIKLALKALSKV.

Residues 1 to 64 are domain I; it reads MIGRIAGILL…EDAHLLYGFL (64 aa). A domain II region spans residues 65-139; the sequence is TPQERTTFRE…GKLGADLGAL (75 aa). The interval 139 to 143 is flexible linker; the sequence is LAGAA. Positions 144–193 are domain III; it reads SQSDHATDILNALVALGYSEKEGLAAIKNVPAGTGVSEGIKLALKALSKV.

Belongs to the RuvA family. In terms of assembly, homotetramer. Forms an RuvA(8)-RuvB(12)-Holliday junction (HJ) complex. HJ DNA is sandwiched between 2 RuvA tetramers; dsDNA enters through RuvA and exits via RuvB. An RuvB hexamer assembles on each DNA strand where it exits the tetramer. Each RuvB hexamer is contacted by two RuvA subunits (via domain III) on 2 adjacent RuvB subunits; this complex drives branch migration. In the full resolvosome a probable DNA-RuvA(4)-RuvB(12)-RuvC(2) complex forms which resolves the HJ.

The protein localises to the cytoplasm. The RuvA-RuvB-RuvC complex processes Holliday junction (HJ) DNA during genetic recombination and DNA repair, while the RuvA-RuvB complex plays an important role in the rescue of blocked DNA replication forks via replication fork reversal (RFR). RuvA specifically binds to HJ cruciform DNA, conferring on it an open structure. The RuvB hexamer acts as an ATP-dependent pump, pulling dsDNA into and through the RuvAB complex. HJ branch migration allows RuvC to scan DNA until it finds its consensus sequence, where it cleaves and resolves the cruciform DNA. The polypeptide is Holliday junction branch migration complex subunit RuvA (Burkholderia ambifaria (strain MC40-6)).